The following is a 152-amino-acid chain: Aspartate carbamoyltransferase regulatory chain (152 aa).

Residues C108, C113, C137, and C140 each coordinate Zn(2+).

This sequence belongs to the PyrI family. In terms of assembly, contains catalytic and regulatory chains. It depends on Zn(2+) as a cofactor.

Its function is as follows. Involved in allosteric regulation of aspartate carbamoyltransferase. The sequence is that of Aspartate carbamoyltransferase regulatory chain from Neisseria meningitidis serogroup B (strain ATCC BAA-335 / MC58).